The chain runs to 285 residues: Dermonecrotic toxin LlSicTox-alphaIII1ii (285 aa).

H12 is an active-site residue. The Mg(2+) site is built by E32 and D34. H47 functions as the Nucleophile in the catalytic mechanism. C51 and C57 are oxidised to a cystine. Residue D91 participates in Mg(2+) binding.

It belongs to the arthropod phospholipase D family. Class I subfamily. The cofactor is Mg(2+). As to expression, expressed by the venom gland.

It localises to the secreted. The enzyme catalyses an N-(acyl)-sphingosylphosphocholine = an N-(acyl)-sphingosyl-1,3-cyclic phosphate + choline. It carries out the reaction an N-(acyl)-sphingosylphosphoethanolamine = an N-(acyl)-sphingosyl-1,3-cyclic phosphate + ethanolamine. It catalyses the reaction a 1-acyl-sn-glycero-3-phosphocholine = a 1-acyl-sn-glycero-2,3-cyclic phosphate + choline. The catalysed reaction is a 1-acyl-sn-glycero-3-phosphoethanolamine = a 1-acyl-sn-glycero-2,3-cyclic phosphate + ethanolamine. Dermonecrotic toxins cleave the phosphodiester linkage between the phosphate and headgroup of certain phospholipids (sphingolipid and lysolipid substrates), forming an alcohol (often choline) and a cyclic phosphate. This toxin acts on sphingomyelin (SM) with high activity (56.8 U/mg). It may also act on ceramide phosphoethanolamine (CPE), lysophosphatidylcholine (LPC) and lysophosphatidylethanolamine (LPE), but not on lysophosphatidylserine (LPS), and lysophosphatidylglycerol (LPG). It acts by transphosphatidylation, releasing exclusively cyclic phosphate products as second products. Induces dermonecrosis, hemolysis, increased vascular permeability, edema, inflammatory response, and platelet aggregation. Is lethal to mice. In Loxosceles laeta (South American recluse spider), this protein is Dermonecrotic toxin LlSicTox-alphaIII1ii.